The primary structure comprises 123 residues: MPTINQLVRKGRKKAEKKQSTPALKGGPQKRGVCTRVYTSTPKKPNSALRKVARVRLTTGMEVAAYIPGMGHNLQEHSVVLVRGGRVKDLPGVRYHIVRGTLDTLGVEDRKQGRSKYGAKRPK.

The interval 1–47 is disordered; it reads MPTINQLVRKGRKKAEKKQSTPALKGGPQKRGVCTRVYTSTPKKPNS. D89 bears the 3-methylthioaspartic acid mark.

This sequence belongs to the universal ribosomal protein uS12 family. In terms of assembly, part of the 30S ribosomal subunit. Contacts proteins S8 and S17. May interact with IF1 in the 30S initiation complex.

In terms of biological role, with S4 and S5 plays an important role in translational accuracy. Functionally, interacts with and stabilizes bases of the 16S rRNA that are involved in tRNA selection in the A site and with the mRNA backbone. Located at the interface of the 30S and 50S subunits, it traverses the body of the 30S subunit contacting proteins on the other side and probably holding the rRNA structure together. The combined cluster of proteins S8, S12 and S17 appears to hold together the shoulder and platform of the 30S subunit. In Desulforapulum autotrophicum (strain ATCC 43914 / DSM 3382 / VKM B-1955 / HRM2) (Desulfobacterium autotrophicum), this protein is Small ribosomal subunit protein uS12.